The following is a 566-amino-acid chain: Putative ABC transporter ATP-binding protein lp_0149 (566 aa).

2 consecutive ABC transporter domains span residues 6–247 (ISFK…GLRE) and 302–536 (LAIE…ASLA). ATP-binding positions include 40–47 (GPSGSGKS) and 335–342 (GQNGTGKS).

This sequence belongs to the ABC transporter superfamily.

It localises to the cell membrane. Probably part of an ABC transporter complex. Responsible for energy coupling to the transport system. This Lactiplantibacillus plantarum (strain ATCC BAA-793 / NCIMB 8826 / WCFS1) (Lactobacillus plantarum) protein is Putative ABC transporter ATP-binding protein lp_0149.